Consider the following 239-residue polypeptide: SKA complex subunit 1 (239 aa).

Residues Pro87 to Gly115 are disordered. Residues Asn116–Ala239 are microtubule binding.

The protein belongs to the SKA1 family. In terms of assembly, component of the SKA complex, composed of two copies of ska-1 and a single copy of ska-3. The core complex associates with microtubules and may form dimeric assemblies. Interacts with ska-3 and microtubules.

It localises to the cytoplasm. It is found in the cytoskeleton. Its subcellular location is the spindle. The protein localises to the chromosome. The protein resides in the centromere. It localises to the kinetochore. Its function is as follows. Component of the SKA complex, a microtubule plus end-binding complex of the outer kinetochore that stabilizes spindle microtubule-kinetochore attachments, promotes alignment of chromosomes at the mitotic spindle equator (chromosome congression) and assists suppression of the spindle assembly checkpoint. Kinetochores, consisting of a centromere-associated inner segment and a microtubule-contacting outer segment, play a crucial role in chromosome segregation by mediating the physical connection between centromeric DNA and spindle microtubules. The outer kinetochore is made up of the ten-subunit KMN network complex, comprising the MIS12, NDC80 and KNL1 complexes, and auxiliary microtubule-associated components such as the SKA complex; together they connect the outer kinetochore with the inner kinetochore, bind microtubules, and mediate interactions with mitotic checkpoint proteins that delay anaphase until chromosomes are bioriented on the spindle. The SKA complex is loaded onto bioriented kinetochores and it facilitates chromosome congression by stabilizing microtubules and end-on attachment of the NDC80 complex to depolymerizing spindle microtubules, thereby assisting the poleward-moving kinetochore in withstanding microtubule pulling forces. The complex associates with dynamic microtubule plus-ends and can track both depolymerizing and elongating microtubules. The complex recruits protein phosphatase 1 (PP1) to the kinetochore in prometaphase and metaphase, to oppose spindle assembly checkpoint signaling and promote the onset of anaphase. In the complex, it mediates interactions with microtubules. During meiosis the SKA complex stabilizes the meiotic spindle and is required for its migration to the cortex. The sequence is that of SKA complex subunit 1 from Caenorhabditis briggsae.